Here is a 402-residue protein sequence, read N- to C-terminus: Nicotinate phosphoribosyltransferase (402 aa).

Histidine 224 carries the post-translational modification Phosphohistidine; by autocatalysis.

It belongs to the NAPRTase family. Post-translationally, transiently phosphorylated on a His residue during the reaction cycle. Phosphorylation strongly increases the affinity for substrates and increases the rate of nicotinate D-ribonucleotide production. Dephosphorylation regenerates the low-affinity form of the enzyme, leading to product release.

It carries out the reaction nicotinate + 5-phospho-alpha-D-ribose 1-diphosphate + ATP + H2O = nicotinate beta-D-ribonucleotide + ADP + phosphate + diphosphate. Its pathway is cofactor biosynthesis; NAD(+) biosynthesis; nicotinate D-ribonucleotide from nicotinate: step 1/1. Functionally, catalyzes the synthesis of beta-nicotinate D-ribonucleotide from nicotinate and 5-phospho-D-ribose 1-phosphate at the expense of ATP. The sequence is that of Nicotinate phosphoribosyltransferase from Neisseria meningitidis serogroup C (strain 053442).